We begin with the raw amino-acid sequence, 201 residues long: Sec-independent protein translocase protein TatB (201 aa).

Residues 1–21 (MLDLGWSEILVIAVVLIVVVG) form a helical membrane-spanning segment. Positions 96 to 201 (LSEAAKAKPA…RRKKTAGTAP (106 aa)) are disordered. Composition is skewed to low complexity over residues 102–114 (AKPA…AADS) and 159–187 (TSAK…APAK). The segment covering 189–201 (PSPRRKKTAGTAP) has biased composition (basic residues).

This sequence belongs to the TatB family. In terms of assembly, the Tat system comprises two distinct complexes: a TatABC complex, containing multiple copies of TatA, TatB and TatC subunits, and a separate TatA complex, containing only TatA subunits. Substrates initially bind to the TatABC complex, which probably triggers association of the separate TatA complex to form the active translocon.

Its subcellular location is the cell inner membrane. In terms of biological role, part of the twin-arginine translocation (Tat) system that transports large folded proteins containing a characteristic twin-arginine motif in their signal peptide across membranes. Together with TatC, TatB is part of a receptor directly interacting with Tat signal peptides. TatB may form an oligomeric binding site that transiently accommodates folded Tat precursor proteins before their translocation. The chain is Sec-independent protein translocase protein TatB from Chelativorans sp. (strain BNC1).